The sequence spans 356 residues: Arginine kinase Lit v 2 (356 aa).

One can recognise a Phosphagen kinase N-terminal domain in the interval 9 to 91; sequence KLEAGFKKLE…FDPIIEDYHV (83 aa). L-arginine is bound at residue 64 to 68; the sequence is GVGIY. One can recognise a Phosphagen kinase C-terminal domain in the interval 119 to 356; that stretch reads FVISTRVRCG…LELIKMEKEM (238 aa). Residues 122–126 and H185 contribute to the ATP site; that span reads STRVR. An L-arginine-binding site is contributed by E225. R229 contacts ATP. C271 serves as a coordination point for L-arginine. ATP is bound by residues 280–284 and 309–314; these read RASVH and RGTRGE. E314 is an L-arginine binding site.

This sequence belongs to the ATP:guanido phosphotransferase family. In terms of tissue distribution, expressed in muscle (at protein level). Expressed in muscle, heart, nerve, stomach and hemocytes, with the highest expression in muscle. Very low expression in eyestalk and intestine. Not expressed in hepatopancreas, gill and skin.

It carries out the reaction L-arginine + ATP = N(omega)-phospho-L-arginine + ADP + H(+). No change in activity after supplementation with 10 mM glucose. However, activity decreases significantly when glucose concentration is higher than 50 mM and almost all activity is lost with 200 mM glucose. Activity is significantly increased after treatment with 10 mM and 50 mM ATP. However, activity drops significantly with 200 mM ATP. Inhibited by 10-200 mM alpha-ketoglutarate. No change in activity after incubation with 10-200 mM L-citrulline, L-ornaline or glycerol. Catalyzes the reversible transfer of high energy ATP gamma-phosphate group to L-arginine. The sequence is that of Arginine kinase Lit v 2 from Penaeus vannamei (Whiteleg shrimp).